A 380-amino-acid polypeptide reads, in one-letter code: Selenoprotein P (380 aa).

The first 19 residues, 1-19, serve as a signal peptide directing secretion; the sequence is MWRSLGLALALCLLPYGGA. A non-standard amino acid (selenocysteine) is located at residue Sec59. N-linked (GlcNAc...) asparagine glycans are attached at residues Asn83, Asn176, and Asn195. The tract at residues 196–257 is disordered; the sequence is KTAEPSEAHS…RGQHRQGHLE (62 aa). Over residues 221–237 the composition is skewed to polar residues; that stretch reads SKPSENQQPGPSETTLP. Basic residues predominate over residues 241–253; that stretch reads LHHHHRHRGQHRQ. A non-standard amino acid (selenocysteine) is located at residue Sec259. Ser264 carries the phosphoserine modification. Non-standard amino acids (selenocysteine) are located at Sec277, Sec318, Sec330, and Sec352. The segment at 346-380 is disordered; it reads RSPPAAUQNQPMNPMEANPNUSUDNQTRKUKUHSN. Low complexity predominate over residues 348-360; that stretch reads PPAAUQNQPMNPM. A glycan (N-linked (GlcNAc...) asparagine) is linked at Asn365. Residues Sec366 and Sec368 are each a non-standard amino acid (selenocysteine). Asn370 is a glycosylation site (N-linked (GlcNAc...) asparagine). Non-standard amino acids (selenocysteine) are located at Sec375 and Sec377.

This sequence belongs to the selenoprotein P family. Phosphorylation sites are present in the extracellular medium. In the kidney, expressed in the cortex with no expression observed in the medulla (at protein level). Expressed by the liver and secreted in plasma.

The protein localises to the secreted. Its function is as follows. Might be responsible for some of the extracellular antioxidant defense properties of selenium or might be involved in the transport of selenium. May supply selenium to tissues such as brain and testis. The polypeptide is Selenoprotein P (Mus musculus (Mouse)).